A 98-amino-acid polypeptide reads, in one-letter code: Large ribosomal subunit protein uL23 (98 aa).

Belongs to the universal ribosomal protein uL23 family. In terms of assembly, part of the 50S ribosomal subunit. Contacts protein L29, and trigger factor when it is bound to the ribosome.

Functionally, one of the early assembly proteins it binds 23S rRNA. One of the proteins that surrounds the polypeptide exit tunnel on the outside of the ribosome. Forms the main docking site for trigger factor binding to the ribosome. This is Large ribosomal subunit protein uL23 from Rickettsia africae (strain ESF-5).